Consider the following 150-residue polypeptide: Large ribosomal subunit protein bL9 (150 aa).

It belongs to the bacterial ribosomal protein bL9 family.

Its function is as follows. Binds to the 23S rRNA. This chain is Large ribosomal subunit protein bL9, found in Polaromonas naphthalenivorans (strain CJ2).